Here is a 361-residue protein sequence, read N- to C-terminus: Phospho-N-acetylmuramoyl-pentapeptide-transferase (361 aa).

10 helical membrane passes run 28–48, 74–94, 99–119, 133–153, 168–188, 203–223, 236–256, 263–283, 288–308, and 338–358; these read LAIIITLSLSFIMGPILIKFL, TMGGIMIILSSGLSTLLLADL, IWITLFGFISFGIIGFMDDYA, SKLVLQGIISLIICVLLEYLD, LNLDLGYFYIVFAIFVIVGSS, VPIAFTAGSFALISYLVGNLI, TGELTVLCAGLVGSCLGFLWF, VFMGDTGSLSLGGVLGIISVI, IVLAIVGGLFVIETASVILQV, and KVVIRFWIISVIFALIGLSSL.

This sequence belongs to the glycosyltransferase 4 family. MraY subfamily. The cofactor is Mg(2+).

It is found in the cell inner membrane. The catalysed reaction is UDP-N-acetyl-alpha-D-muramoyl-L-alanyl-gamma-D-glutamyl-meso-2,6-diaminopimeloyl-D-alanyl-D-alanine + di-trans,octa-cis-undecaprenyl phosphate = di-trans,octa-cis-undecaprenyl diphospho-N-acetyl-alpha-D-muramoyl-L-alanyl-D-glutamyl-meso-2,6-diaminopimeloyl-D-alanyl-D-alanine + UMP. The protein operates within cell wall biogenesis; peptidoglycan biosynthesis. In terms of biological role, catalyzes the initial step of the lipid cycle reactions in the biosynthesis of the cell wall peptidoglycan: transfers peptidoglycan precursor phospho-MurNAc-pentapeptide from UDP-MurNAc-pentapeptide onto the lipid carrier undecaprenyl phosphate, yielding undecaprenyl-pyrophosphoryl-MurNAc-pentapeptide, known as lipid I. This chain is Phospho-N-acetylmuramoyl-pentapeptide-transferase, found in Rickettsia akari (strain Hartford).